Here is a 258-residue protein sequence, read N- to C-terminus: Ubiquinone/menaquinone biosynthesis C-methyltransferase UbiE (258 aa).

S-adenosyl-L-methionine-binding positions include threonine 81, aspartate 102, and 130–131 (NA).

It belongs to the class I-like SAM-binding methyltransferase superfamily. MenG/UbiE family.

It carries out the reaction a 2-demethylmenaquinol + S-adenosyl-L-methionine = a menaquinol + S-adenosyl-L-homocysteine + H(+). The catalysed reaction is a 2-methoxy-6-(all-trans-polyprenyl)benzene-1,4-diol + S-adenosyl-L-methionine = a 5-methoxy-2-methyl-3-(all-trans-polyprenyl)benzene-1,4-diol + S-adenosyl-L-homocysteine + H(+). The protein operates within quinol/quinone metabolism; menaquinone biosynthesis; menaquinol from 1,4-dihydroxy-2-naphthoate: step 2/2. It functions in the pathway cofactor biosynthesis; ubiquinone biosynthesis. In terms of biological role, methyltransferase required for the conversion of demethylmenaquinol (DMKH2) to menaquinol (MKH2) and the conversion of 2-polyprenyl-6-methoxy-1,4-benzoquinol (DDMQH2) to 2-polyprenyl-3-methyl-6-methoxy-1,4-benzoquinol (DMQH2). This chain is Ubiquinone/menaquinone biosynthesis C-methyltransferase UbiE, found in Rhizobium rhizogenes (strain K84 / ATCC BAA-868) (Agrobacterium radiobacter).